A 221-amino-acid polypeptide reads, in one-letter code: ATP-dependent Clp protease proteolytic subunit 3 (221 aa).

The active-site Nucleophile is the S118. Residue H143 is part of the active site.

This sequence belongs to the peptidase S14 family. Fourteen ClpP subunits assemble into 2 heptameric rings which stack back to back to give a disk-like structure with a central cavity, resembling the structure of eukaryotic proteasomes.

The protein resides in the cytoplasm. It catalyses the reaction Hydrolysis of proteins to small peptides in the presence of ATP and magnesium. alpha-casein is the usual test substrate. In the absence of ATP, only oligopeptides shorter than five residues are hydrolyzed (such as succinyl-Leu-Tyr-|-NHMec, and Leu-Tyr-Leu-|-Tyr-Trp, in which cleavage of the -Tyr-|-Leu- and -Tyr-|-Trp bonds also occurs).. Its function is as follows. Cleaves peptides in various proteins in a process that requires ATP hydrolysis. Has a chymotrypsin-like activity. Plays a major role in the degradation of misfolded proteins. This Nocardia farcinica (strain IFM 10152) protein is ATP-dependent Clp protease proteolytic subunit 3.